The primary structure comprises 772 residues: Gelsolin (772 aa).

The first 17 residues, 1-17 (LGALVVALCALSPPARA), serve as a signal peptide directing secretion. Residues 18 to 33 (ATASRGAPQARAPQGR) constitute a propeptide that is removed on maturation. The disordered stretch occupies residues 19–38 (TASRGAPQARAPQGRVSPMR). Residues 41-166 (TMVVEHPEFL…YKKGGVASGF (126 aa)) form an actin-severing region. A Gelsolin-like 1 repeat occupies 66–148 (FDLVPVPPNL…VQGFESATFL (83 aa)). Tyrosine 76 carries the post-translational modification Phosphotyrosine. Residues glycine 82, aspartate 83, glutamate 114, aspartate 126, glycine 131, and alanine 133 each contribute to the Ca(2+) site. The interval 113 to 116 (DESG) is actin-actin interfilament contact point. 152 to 159 (KSGLKYKK) provides a ligand contact to a 1,2-diacyl-sn-glycero-3-phospho-(1D-myo-inositol-4,5-bisphosphate). Residue valine 162 participates in Ca(2+) binding. 178-186 (RLFQVKGRR) serves as a coordination point for a 1,2-diacyl-sn-glycero-3-phospho-(1D-myo-inositol-4,5-bisphosphate). The stretch at 188-260 (VRATEVPVSW…SEEDAEPAGM (73 aa)) is one Gelsolin-like 2 repeat. Ca(2+) is bound by residues glycine 203 and aspartate 204. A disulfide bridge connects residues cysteine 205 and cysteine 218. Glutamate 226, aspartate 276, glutamate 319, aspartate 320, and glutamate 344 together coordinate Ca(2+). Residues 307–379 (DENPFAQGAL…LPEGGETPLF (73 aa)) form a Gelsolin-like 3 repeat. A phosphotyrosine mark is found at tyrosine 399 and tyrosine 455. Residues 424–772 (AAQHGMDDDG…LDRAIAELAA (349 aa)) are actin-binding, Ca-sensitive. One copy of the Gelsolin-like 4 repeat lies at 445-526 (SNKVPVDPAT…VQGKEPAHLM (82 aa)). Ca(2+)-binding residues include glycine 461, aspartate 462, glutamate 492, aspartate 504, glycine 509, proline 511, and threonine 541. One copy of the Gelsolin-like 5 repeat lies at 567–632 (RAVEVIPKAG…AEGSEPDSFW (66 aa)). Lysine 574 is subject to N6-acetyllysine. Ca(2+)-binding residues include asparagine 581 and aspartate 582. Tyrosine 593 bears the Phosphotyrosine mark. Glutamate 604 provides a ligand contact to Ca(2+). Phosphotyrosine is present on tyrosine 641. The stretch at 671 to 746 (VEEVPGELMQ…VKQGFEPPSF (76 aa)) is one Gelsolin-like 6 repeat. Positions 686, 687, and 709 each coordinate Ca(2+). Position 732 is a phosphothreonine (threonine 732).

This sequence belongs to the villin/gelsolin family. Binds to actin and to fibronectin. Identified in a complex composed of ACTA1, COBL, GSN and TMSB4X. Interacts with the inactive form of EIF2AK2/PKR. Interacts with FLII. In terms of processing, phosphorylated on tyrosine residues in vitro.

It localises to the cytoplasm. It is found in the cytoskeleton. The protein resides in the secreted. Calcium-regulated, actin-modulating protein that binds to the plus (or barbed) ends of actin monomers or filaments, preventing monomer exchange (end-blocking or capping). It can promote the assembly of monomers into filaments (nucleation) as well as sever filaments already formed. Plays a role in ciliogenesis. The polypeptide is Gelsolin (GSN) (Sus scrofa (Pig)).